Here is a 225-residue protein sequence, read N- to C-terminus: Glucosyl-3-phosphoglycerate phosphatase (225 aa).

Arg10 is a binding site for substrate. His11 functions as the Tele-phosphohistidine intermediate in the catalytic mechanism. Arg60 serves as a coordination point for substrate. Glu84 serves as the catalytic Proton donor/acceptor. Position 158 (His158) interacts with substrate.

This sequence belongs to the phosphoglycerate mutase family. Homodimer.

It catalyses the reaction (2R)-2-O-(alpha-D-glucopyranosyl)-3-phospho-glycerate + H2O = (2R)-2-O-(alpha-D-glucopyranosyl)-glycerate + phosphate. Involved in the biosynthesis of mycobacterial methylglucose lipopolysaccharides (MGLP). Catalyzes the dephosphorylation of glucosyl-3-phosphoglycerate (GPG) to glucosylglycerate. This is Glucosyl-3-phosphoglycerate phosphatase from Mycolicibacterium vanbaalenii (strain DSM 7251 / JCM 13017 / BCRC 16820 / KCTC 9966 / NRRL B-24157 / PYR-1) (Mycobacterium vanbaalenii).